The sequence spans 100 residues: Secreted protein of Ly-6 domain 1 (100 aa).

An N-terminal signal peptide occupies residues 1–22 (MAKCLLLLLLVVLSSLLGLPQA). The UPAR/Ly6 domain occupies 23–100 (LECFQCNRVN…CHDSPLCNKF (78 aa)). Cystine bridges form between cysteine 25–cysteine 52, cysteine 28–cysteine 37, cysteine 44–cysteine 70, cysteine 74–cysteine 90, and cysteine 91–cysteine 97. N-linked (GlcNAc...) asparagine glycosylation occurs at asparagine 60.

Post-translationally, glycosylated. As to expression, expressed in placenta, where it is detected in both fetal tissues (cotyledon and intercotyledon) and maternal tissues (caruncle and intercaruncular endometrium) (at protein level). Expressed in the mesenchyme area of villi in the cotyledon (at protein level). In endometrium, expressed in the luminal epithelium and weakly in the subluminal stroma (at protein level). Detected in trophoblast mononucleate cells (TMCs) (at protein level). Also detected in trophoblast binucleate cells (BNCs). Overall, expression is strongest in fetal tissue and lower in maternal tissue. Not detected in other tissues tested.

The protein resides in the secreted. In terms of biological role, binds specifically to type I collagen. This Bos taurus (Bovine) protein is Secreted protein of Ly-6 domain 1.